The following is a 911-amino-acid chain: DNA ligase 4 (911 aa).

ATP-binding residues include glutamate 271, threonine 272, lysine 273, leucine 274, arginine 278, glutamate 331, lysine 345, phenylalanine 367, glutamate 427, lysine 432, lysine 449, and lysine 451. The active-site N6-AMP-lysine intermediate is the lysine 273. Glutamate 331 contributes to the Mg(2+) binding site. Glutamate 427 contacts Mg(2+). The required for catalytic activity stretch occupies residues leucine 610–aspartate 620. 2 BRCT domains span residues lysine 654 to methionine 743 and serine 808 to isoleucine 911.

Belongs to the ATP-dependent DNA ligase family. As to quaternary structure, interacts with XRCC4; the LIG4-XRCC4 subcomplex has a 1:2 stoichiometry and XRCC4 is required for LIG4 stability. Component of the core long-range non-homologous end joining (NHEJ) complex (also named DNA-PK complex) composed of PRKDC, LIG4, XRCC4, XRCC6/Ku70, XRCC5/Ku86 and NHEJ1/XLF. Additional component of the NHEJ complex includes PAXX. Following autophosphorylation, PRKDC dissociates from DNA, leading to formation of the short-range NHEJ complex, composed of LIG4, XRCC4, XRCC6/Ku70, XRCC5/Ku86 and NHEJ1/XLF. Interacts with DCLRE1C; the interaction is direct. Interacts with APLF. Mg(2+) is required as a cofactor.

The protein localises to the nucleus. The enzyme catalyses ATP + (deoxyribonucleotide)n-3'-hydroxyl + 5'-phospho-(deoxyribonucleotide)m = (deoxyribonucleotide)n+m + AMP + diphosphate.. Its function is as follows. DNA ligase involved in DNA non-homologous end joining (NHEJ); required for double-strand break (DSB) repair and V(D)J recombination. Catalyzes the NHEJ ligation step of the broken DNA during DSB repair by resealing the DNA breaks after the gap filling is completed. Joins single-strand breaks in a double-stranded polydeoxynucleotide in an ATP-dependent reaction. LIG4 is mechanistically flexible: it can ligate nicks as well as compatible DNA overhangs alone, while in the presence of XRCC4, it can ligate ends with 2-nucleotides (nt) microhomology and 1-nt gaps. Forms a subcomplex with XRCC4; the LIG4-XRCC4 subcomplex is responsible for the NHEJ ligation step and XRCC4 enhances the joining activity of LIG4. Binding of the LIG4-XRCC4 complex to DNA ends is dependent on the assembly of the DNA-dependent protein kinase complex DNA-PK to these DNA ends. LIG4 regulates nuclear localization of XRCC4. The protein is DNA ligase 4 of Pongo abelii (Sumatran orangutan).